A 337-amino-acid polypeptide reads, in one-letter code: Monoacylglycerol lipase ABHD6 (337 aa).

Topologically, residues 1-19 (MDLDVVNMFVIAGGTLALP) are extracellular. A helical; Signal-anchor for type II membrane protein membrane pass occupies residues 20–42 (ILAFVASFLLWPSALIRIYYWYW). The Cytoplasmic segment spans residues 43–337 (RRTLGMQVRY…HSTDNSKKLD (295 aa)). An AB hydrolase-1 domain is found at 72–313 (PSILMLHGFS…CGHSVVMERP (242 aa)). The active-site Nucleophile is S148. Catalysis depends on charge relay system residues D278 and H306.

It belongs to the AB hydrolase superfamily.

The protein localises to the late endosome membrane. The protein resides in the lysosome membrane. It is found in the mitochondrion membrane. The catalysed reaction is Hydrolyzes glycerol monoesters of long-chain fatty acids.. It catalyses the reaction 1-octanoylglycerol + H2O = octanoate + glycerol + H(+). The enzyme catalyses 1-decanoylglycerol + H2O = decanoate + glycerol + H(+). It carries out the reaction 1-dodecanoylglycerol + H2O = dodecanoate + glycerol + H(+). The catalysed reaction is 1-tetradecanoylglycerol + H2O = tetradecanoate + glycerol + H(+). It catalyses the reaction 2-hexadecanoylglycerol + H2O = glycerol + hexadecanoate + H(+). The enzyme catalyses 2-(9Z-octadecenoyl)-glycerol + H2O = glycerol + (9Z)-octadecenoate + H(+). It carries out the reaction 1-(9Z-octadecenoyl)-glycerol + H2O = glycerol + (9Z)-octadecenoate + H(+). The catalysed reaction is 2-(9Z,12Z-octadecadienoyl)-glycerol + H2O = (9Z,12Z)-octadecadienoate + glycerol + H(+). It catalyses the reaction 2-(5Z,8Z,11Z,14Z-eicosatetraenoyl)-glycerol + H2O = glycerol + (5Z,8Z,11Z,14Z)-eicosatetraenoate + H(+). The enzyme catalyses 1-(5Z,8Z,11Z,14Z-eicosatetraenoyl)-glycerol + H2O = glycerol + (5Z,8Z,11Z,14Z)-eicosatetraenoate + H(+). It carries out the reaction 1-(9Z,12Z-octadecadienoyl)-glycerol + H2O = (9Z,12Z)-octadecadienoate + glycerol + H(+). The catalysed reaction is 3-(9Z-octadecenoyl)-sn-glycero-1-phospho-(3'-(9Z-octadecenoyl)-1'-sn-glycerol) + H2O = 3-(9Z-octadecenoyl)-sn-glycero-1-phospho-(1'-sn-glycerol) + (9Z)-octadecenoate + H(+). It catalyses the reaction (S,S)-2-(9Z-octadecenoyl)-sn-glycero-1-phospho-(2'-(9Z-octadecenoyl)-1'-sn-glycerol) + H2O = (S,S)-2-(9Z-octadecenoyl)-sn-glycero-1-phospho-(1'-sn-glycerol) + (9Z)-octadecenoate + H(+). The enzyme catalyses (R,R)-2-(9Z-octadecenoyl)-sn-glycero-3-phospho-(2'-(9Z-octadecenoyl)-3'-sn-glycerol) + H2O = (R,R)-2-(9Z-octadecenoyl)-sn-glycero-3-phospho-(3'-sn-glycerol) + (9Z)-octadecenoate + H(+). Functionally, lipase that preferentially hydrolysis medium-chain saturated monoacylglycerols including 2-arachidonoylglycerol. Through 2-arachidonoylglycerol degradation may regulate endocannabinoid signaling pathways. Also has a lysophosphatidyl lipase activity with a preference for lysophosphatidylglycerol among other lysophospholipids. Also able to degrade bis(monoacylglycero)phosphate (BMP) and constitutes the major enzyme for BMP catabolism. BMP, also known as lysobisphosphatidic acid, is enriched in late endosomes and lysosomes and plays a key role in the formation of intraluminal vesicles and in lipid sorting. The sequence is that of Monoacylglycerol lipase ABHD6 from Bos taurus (Bovine).